Consider the following 305-residue polypeptide: Glycine--tRNA ligase alpha subunit (305 aa).

The protein belongs to the class-II aminoacyl-tRNA synthetase family. Tetramer of two alpha and two beta subunits.

It is found in the cytoplasm. The enzyme catalyses tRNA(Gly) + glycine + ATP = glycyl-tRNA(Gly) + AMP + diphosphate. The polypeptide is Glycine--tRNA ligase alpha subunit (Streptococcus pneumoniae (strain 70585)).